The sequence spans 1331 residues: X-linked retinitis pigmentosa GTPase regulator-interacting protein 1 (1331 aa).

Disordered stretches follow at residues 1–165, 183–220, and 351–374; these read MQHL…PPAF, SQLT…SEEC, and HQPL…LPPQ. The span at 41-67 shows a compositional bias: basic and acidic residues; it reads NQKELNCRRLHLHEEPTLVKEPSPKQR. Polar residues-rich tracts occupy residues 77–86 and 183–193; these read VQRSTTTQPD and SQLTHTMTTDS. Over residues 194-220 the composition is skewed to basic and acidic residues; the sequence is THVEEIPRSPEKTSKVEKPEQRSSEEC. Coiled-coil stretches lie at residues 236 to 352 and 498 to 546; these read ELIR…SSHQ and MCYQ…LRSH. Positions 351–367 are enriched in polar residues; it reads HQPLDSSHQPHWSTELT. One can recognise a C2 domain in the interval 745 to 870; that stretch reads GARKVQSNES…AQNKSIKGDF (126 aa). Disordered stretches follow at residues 899-1057 and 1088-1146; these read FQMS…VQDK and AEDG…SDDI. Residues 908–999 are a coiled coil; sequence EGEEKEEEGG…DVLEASFTEE (92 aa). Residues 910–988 are compositionally biased toward acidic residues; the sequence is EEKEEEGGEE…EEEEEEEDEN (79 aa). Composition is skewed to basic and acidic residues over residues 1022–1039 and 1088–1115; these read PEKR…REHQ and AEDG…EHPS. The span at 1129 to 1141 shows a compositional bias: polar residues; that stretch reads CEQASEVSETQTT. An interaction with RPGR region spans residues 1136–1326; that stretch reads SETQTTDSDD…ALHGIYKEMT (191 aa).

Belongs to the RPGRIP1 family. Interacts with NPHP4. Interacts with NEK4. Forms homodimers and elongated homopolymers. Interacts with RPGR. Interacts with SPATA7. Interacts with CEP290/NPHP6; mediating the association between RPGR and CEP290/NPHP6. Expressed in the retina (at protein level).

It is found in the cell projection. It localises to the cilium. In terms of biological role, may function as scaffolding protein. Required for normal location of RPGR at the connecting cilium of photoreceptor cells. Required for normal disk morphogenesis and disk organization in the outer segment of photoreceptor cells and for survival of photoreceptor cells. The sequence is that of X-linked retinitis pigmentosa GTPase regulator-interacting protein 1 (Rpgrip1) from Mus musculus (Mouse).